The following is a 425-amino-acid chain: UDP-N-acetylglucosamine 1-carboxyvinyltransferase (425 aa).

A phosphoenolpyruvate-binding site is contributed by 22 to 23 (KN). UDP-N-acetyl-alpha-D-glucosamine is bound at residue Arg93. Cys117 serves as the catalytic Proton donor. Cys117 is subject to 2-(S-cysteinyl)pyruvic acid O-phosphothioketal. UDP-N-acetyl-alpha-D-glucosamine is bound by residues 122 to 126 (RPIDL), Asp307, and Val329.

The protein belongs to the EPSP synthase family. MurA subfamily.

It localises to the cytoplasm. The catalysed reaction is phosphoenolpyruvate + UDP-N-acetyl-alpha-D-glucosamine = UDP-N-acetyl-3-O-(1-carboxyvinyl)-alpha-D-glucosamine + phosphate. It functions in the pathway cell wall biogenesis; peptidoglycan biosynthesis. In terms of biological role, cell wall formation. Adds enolpyruvyl to UDP-N-acetylglucosamine. The sequence is that of UDP-N-acetylglucosamine 1-carboxyvinyltransferase from Prosthecochloris aestuarii (strain DSM 271 / SK 413).